The chain runs to 873 residues: Leucine--tRNA ligase (873 aa).

A 'HIGH' region motif is present at residues 42–52 (PYPSGKLHMGH). The 'KMSKS' region motif lies at 628 to 632 (KMAKS). ATP is bound at residue Lys631.

Belongs to the class-I aminoacyl-tRNA synthetase family.

It is found in the cytoplasm. It catalyses the reaction tRNA(Leu) + L-leucine + ATP = L-leucyl-tRNA(Leu) + AMP + diphosphate. This is Leucine--tRNA ligase from Aromatoleum aromaticum (strain DSM 19018 / LMG 30748 / EbN1) (Azoarcus sp. (strain EbN1)).